Consider the following 239-residue polypeptide: Acidic leucine-rich nuclear phosphoprotein 32 family member B (239 aa).

4 LRR repeats span residues 16–40, 43–64, 65–87, and 89–110; these read AADAKELVLDNCRSDDGKIIGLTSE, SLEFLSMINVNLLSVANLPKLP, KLKKLELSDNRISGGLEVLAERT, and NLTHLNLSGNKIKEINTLEPLK. The LRRCT domain occupies 123–165; that stretch reads CEVTMLNNYRESVFELLPKLTFLDGFDADDQEAPDSDPEAEDL. A compositionally biased stretch (acidic residues) spans 149-215; that stretch reads DADDQEAPDS…EEDEDDEDVP (67 aa). A disordered region spans residues 149–239; that stretch reads DADDQEAPDS…EEEEDDEDDE (91 aa). The span at 216–225 shows a compositional bias: basic and acidic residues; it reads QGEKRKRDLS. The segment covering 226-239 has biased composition (acidic residues); the sequence is DEGEEEEEDDEDDE.

It belongs to the ANP32 family.

It localises to the nucleus. In terms of biological role, multifunctional protein working as a cell cycle progression factor as well as a cell survival factor. Required for the progression from the G1 to the S phase. Anti-apoptotic protein which functions as a caspase-3 inhibitor. Has no phosphatase 2A (PP2A) inhibitor activity. Exhibits histone chaperone properties, stimulating core histones to assemble into a nucleosome. The chain is Acidic leucine-rich nuclear phosphoprotein 32 family member B (anp32b) from Xenopus laevis (African clawed frog).